Consider the following 140-residue polypeptide: uncharacterized protein (140 aa).

The segment at 121–140 is disordered; the sequence is EEVKNGELIDPNVTTEDEKL.

This is an uncharacterized protein from Schizosaccharomyces pombe (strain 972 / ATCC 24843) (Fission yeast).